The chain runs to 149 residues: Transcriptional repressor NrdR (149 aa).

A zinc finger lies at 3-34; the sequence is CPFCGTQDTKVIDSRLVADGASVRRRRECNHC. The ATP-cone domain occupies 49-139; sequence PRVIKTDGSR…VYRSFEDIRE (91 aa).

This sequence belongs to the NrdR family. It depends on Zn(2+) as a cofactor.

Negatively regulates transcription of bacterial ribonucleotide reductase nrd genes and operons by binding to NrdR-boxes. The protein is Transcriptional repressor NrdR of Idiomarina loihiensis (strain ATCC BAA-735 / DSM 15497 / L2-TR).